The following is a 599-amino-acid chain: Potassium-transporting ATPase potassium-binding subunit (599 aa).

The next 12 helical transmembrane spans lie at 8 to 28, 61 to 81, 133 to 153, 176 to 196, 280 to 300, 311 to 331, 366 to 386, 391 to 411, 416 to 436, 456 to 476, 521 to 541, and 563 to 583; these read LLAL…IWLA, WQYA…VYAL, ALAV…FALF, AWLL…NGVI, LTNF…CFAF, WAVL…ITPA, INAS…AVIA, FTPL…VVFG, GLYG…LMIG, IAIL…VLAG, LLGL…LAIA, and LFVL…YVPA.

The protein belongs to the KdpA family. In terms of assembly, the system is composed of three essential subunits: KdpA, KdpB and KdpC.

The protein localises to the cell inner membrane. In terms of biological role, part of the high-affinity ATP-driven potassium transport (or Kdp) system, which catalyzes the hydrolysis of ATP coupled with the electrogenic transport of potassium into the cytoplasm. This subunit binds the periplasmic potassium ions and delivers the ions to the membrane domain of KdpB through an intramembrane tunnel. In Polaromonas naphthalenivorans (strain CJ2), this protein is Potassium-transporting ATPase potassium-binding subunit.